Reading from the N-terminus, the 301-residue chain is Phosphate transport system permease protein PstA 2 (301 aa).

The next 6 membrane-spanning stretches (helical) occupy residues 36 to 56 (ACVCCLAVVITPTLWMLIGVV), 83 to 103 (IIGTAVLAIGVILVGGTVSVL), 127 to 147 (LSGIPSIVLGYVGYLALVVYF), 149 to 169 (WGFSLAAGVLVLSVMSIPYIA), 209 to 229 (GIVTGMLVALALAIGETAPLL), and 274 to 294 (ALLLIVFLLLLIFIGRLINWL). An ABC transmembrane type-1 domain is found at 83 to 288 (IIGTAVLAIG…VFLLLLIFIG (206 aa)).

It belongs to the binding-protein-dependent transport system permease family. CysTW subfamily.

The protein localises to the cell membrane. Its function is as follows. Part of the binding-protein-dependent transport system for phosphate; probably responsible for the translocation of the substrate across the membrane. The polypeptide is Phosphate transport system permease protein PstA 2 (pstA2) (Mycobacterium bovis (strain ATCC BAA-935 / AF2122/97)).